The primary structure comprises 312 residues: Aquaporin Lacbi1:391485 (312 aa).

The Cytoplasmic segment spans residues 1-50 (MDDKFDDDALPNSKTTPEDYGDKLAEYDYTNTFPNTWMRLREPFREYIAE). The helical transmembrane segment at 51–71 (FVGVAVLIIFGVGADCQVVLS) threads the bilayer. At 72 to 89 (ANTGVAPSPKGDYLSLNC) the chain is on the extracellular side. The helical transmembrane segment at 90 to 110 (GWAIGTAMGVWISGGISGGHI) threads the bilayer. The NPA 1 motif lies at 111–113 (NPA). Over 111–128 (NPAVTLALMAWRGFPWWK) the chain is Cytoplasmic. A helical membrane pass occupies residues 129 to 149 (VPGFIFAQLLGGIVGAGLVYV). At 150–183 (NYIHAIDIVEGGRHIRTLDTAGLFATYAADYMTN) the chain is on the extracellular side. Residue Asn183 is glycosylated (N-linked (GlcNAc...) asparagine). Residues 184 to 204 (VSCFFSEFLATAVLIVVIHAM) form a helical membrane-spanning segment. The Cytoplasmic segment spans residues 205 to 213 (NDKRNAPPP). The helical transmembrane segment at 214–234 (AGLAPLVLFFLILGIGASLGM) threads the bilayer. The Extracellular portion of the chain corresponds to 235-267 (ETGYAINPARDLGPRMLTAMVGYGRQVFAFRNQ). Positions 241–243 (NPA) match the NPA 2 motif. A helical membrane pass occupies residues 268 to 288 (YWIWCPVIAPFLGAQVGTIFY). Over 289–312 (DLFFYKGQDNVFGRLGSHIHISPA) the chain is Cytoplasmic.

Belongs to the MIP/aquaporin (TC 1.A.8) family.

It is found in the membrane. The enzyme catalyses H2O(in) = H2O(out). It carries out the reaction glycerol(in) = glycerol(out). The catalysed reaction is NH4(+)(in) = NH4(+)(out). Its function is as follows. Water channel required to facilitate the transport of water across membranes. In addition to water, also shows strong glycerol and ammonium transport activities. May be involved in fungal nitrogen (ammonium) support of the plant host in symbiosis. Glycerol accumulation has never been observed in ectomycorrhizal (ECM) fungi, therefore, glycerol permeability of Lacbi1:391485 might be a relict of the affiliation of the protein to the group of aquaglyceroporins, and other osmotic active compounds (e.g. trehalose or mannitol) may have taken over glycerol function in ECM fungi. The sequence is that of Aquaporin Lacbi1:391485 from Laccaria bicolor (strain S238N-H82 / ATCC MYA-4686) (Bicoloured deceiver).